The sequence spans 1557 residues: Target of rapamycin complex 1 subunit KOG1 (1557 aa).

4 HEAT repeats span residues 548-586 (RHPPEQLPIVLQVLLSQVHRIRALVLLSRFLDLGPWAVY), 588-625 (SLSIGIFPYVLKLLQSPAPELKPILVFIWARIMSIDYK), 777-814 (CMNTGAVEILLKSLKDPVPEVRTASIFALKHFISGFQD), and 888-925 (RQEIGNLISILPLINDGSSLVRKELVVYFSHIVSRYSN). The segment covering 1084–1098 (SESNSDSDTQSSNTS) has biased composition (low complexity). The disordered stretch occupies residues 1084-1114 (SESNSDSDTQSSNTSMKSHTSKKGPSGLYLL). 7 WD repeats span residues 1207–1248 (NNKS…SKFS), 1252–1293 (PFGT…DTFK), 1296–1346 (SAWR…VEVD), 1350–1390 (KTSS…RDSM), 1400–1440 (KQGV…PVES), 1452–1492 (SQQK…NSFK), and 1517–1557 (TSDA…IDYF).

Belongs to the WD repeat RAPTOR family. The target of rapamycin complex 1 (TORC1) is composed of at least KOG1, LST8, TCO89 and either TOR1 (TORC1-A) or TOR2 (TORC1-B). Interacts with PIB2; following activation of PIB2 by glutamine or cysteine. TORC1 binds to and is inhibited by FKBP-rapamycin.

The protein resides in the cell membrane. It localises to the vacuole membrane. Its function is as follows. Component of TORC1, which regulates multiple cellular processes to control cell growth in response to environmental signals. Nutrient limitation and environmental stress signals cause inactivation of TORC1. Active TORC1 positively controls ribosome biogenesis via control of rRNA, ribosomal protein and tRNA gene expression, and rRNA processing. TORC1 positively controls protein biosynthesis by regulation of mRNA stability, translation initiation factor activity, and high-affinity amino acid permeases that serve to provide amino acids for use by the translation machinery. TORC1 also promotes growth by sequestering a number of nutrient and general stress-responsive transcription factors in the cytoplasm. TORC1 negatively controls macroautophagy, a process to recycle surplus cytoplasmic mass under nutrient starvation conditions. KOG1 may have a role in binding and recruiting substrates of TORC1. The sequence is that of Target of rapamycin complex 1 subunit KOG1 (KOG1) from Saccharomyces cerevisiae (strain ATCC 204508 / S288c) (Baker's yeast).